A 576-amino-acid chain; its full sequence is MNIHALLVNRFTEALQEMGVENAPVPVSRSARPEFGEYQFNGAMALAKQLKQKPRDIAEKIVETVKLDDIASKLEVAGPGFINVHLNDAWLANQCELSLTDPRLGIAKSPEQNIVVDYSSPNLAKEMHVGHLRTTIIGDAVVKVLEFLGHNVIRQNHMGDWGTQFGMLLAHLSDKLQEEVAETALSDLEDFYREAKVRFDEEEGFADRAREYVVKLQGGDAQCLALWEKFIDVSITHSEEVYDKLNVSLTRKDIMGESAYNDDLANVISDLKTKGLAVEDQGAQVVFIPELADKEGNPAVYIVQKSGGGYLYATTDLAAMRYRSGKLNADRTLILTDARQALHFKQTEIVGRKAGFMKEEQTYEHCPFGMMLGSDGKPFKTRTGGTVKLVELLDEAVERAGKLIAERDNDLSEEELKEVARKVGIGAVKYADLSKNRTTDYMFNWDSMLSFEGNTAPYLQYAYTRVKSLFRKAGVDMATMPVDIKLVEKQEHALAVLLMQFEEVIGMVSREATPHVLCTYLYDVASAFMTFYEACPMLKEGIEPQVRDSRLALSALVAKTLEKGLTLLGIETLEKM.

Residues 121 to 131 (PNLAKEMHVGH) carry the 'HIGH' region motif.

It belongs to the class-I aminoacyl-tRNA synthetase family. In terms of assembly, monomer.

The protein localises to the cytoplasm. It catalyses the reaction tRNA(Arg) + L-arginine + ATP = L-arginyl-tRNA(Arg) + AMP + diphosphate. The sequence is that of Arginine--tRNA ligase from Alteromonas mediterranea (strain DSM 17117 / CIP 110805 / LMG 28347 / Deep ecotype).